Reading from the N-terminus, the 436-residue chain is GTPase Der (436 aa).

2 EngA-type G domains span residues 4–167 and 176–351; these read PVIA…PKIE and IRFS…ESHS. Residues 10-17, 57-61, 119-122, 182-189, 229-233, and 294-297 each bind GTP; these read GRPNVGKS, DTGGI, NKVD, DTAGM, and NKWD. The KH-like domain maps to 352–436; it reads IRVQTNVLND…PIHIIARARD (85 aa).

It belongs to the TRAFAC class TrmE-Era-EngA-EngB-Septin-like GTPase superfamily. EngA (Der) GTPase family. In terms of assembly, associates with the 50S ribosomal subunit.

Functionally, GTPase that plays an essential role in the late steps of ribosome biogenesis. This chain is GTPase Der, found in Bacillus cereus (strain G9842).